The following is a 586-amino-acid chain: Proline--tRNA ligase (586 aa).

It belongs to the class-II aminoacyl-tRNA synthetase family. ProS type 1 subfamily. Homodimer.

The protein resides in the cytoplasm. It carries out the reaction tRNA(Pro) + L-proline + ATP = L-prolyl-tRNA(Pro) + AMP + diphosphate. Catalyzes the attachment of proline to tRNA(Pro) in a two-step reaction: proline is first activated by ATP to form Pro-AMP and then transferred to the acceptor end of tRNA(Pro). As ProRS can inadvertently accommodate and process non-cognate amino acids such as alanine and cysteine, to avoid such errors it has two additional distinct editing activities against alanine. One activity is designated as 'pretransfer' editing and involves the tRNA(Pro)-independent hydrolysis of activated Ala-AMP. The other activity is designated 'posttransfer' editing and involves deacylation of mischarged Ala-tRNA(Pro). The misacylated Cys-tRNA(Pro) is not edited by ProRS. In Leptospira biflexa serovar Patoc (strain Patoc 1 / Ames), this protein is Proline--tRNA ligase.